The primary structure comprises 252 residues: Small ribosomal subunit protein uS3 (252 aa).

In terms of domain architecture, KH type-2 spans 39–111; it reads IRKLINNFAK…DVNLNVLEVK (73 aa). A disordered region spans residues 226-252; it reads SQSSNNPNRRPRNFKGGNNNHVNAKKN.

It belongs to the universal ribosomal protein uS3 family. Part of the 30S ribosomal subunit. Forms a tight complex with proteins S10 and S14.

In terms of biological role, binds the lower part of the 30S subunit head. Binds mRNA in the 70S ribosome, positioning it for translation. This chain is Small ribosomal subunit protein uS3, found in Aster yellows witches'-broom phytoplasma (strain AYWB).